Here is a 476-residue protein sequence, read N- to C-terminus: Adenosylhomocysteinase (476 aa).

Positions 62, 141, and 201 each coordinate substrate. An NAD(+)-binding site is contributed by 202–204 (TTT). The substrate site is built by Lys-231 and Asp-235. NAD(+) is bound by residues Asn-236, 265–270 (GYGDVG), Glu-288, Asn-323, 344–346 (IGH), and Asn-389.

The protein belongs to the adenosylhomocysteinase family. Requires NAD(+) as cofactor.

Its subcellular location is the cytoplasm. It carries out the reaction S-adenosyl-L-homocysteine + H2O = L-homocysteine + adenosine. It functions in the pathway amino-acid biosynthesis; L-homocysteine biosynthesis; L-homocysteine from S-adenosyl-L-homocysteine: step 1/1. Functionally, may play a key role in the regulation of the intracellular concentration of adenosylhomocysteine. The chain is Adenosylhomocysteinase from Delftia acidovorans (strain DSM 14801 / SPH-1).